A 63-amino-acid polypeptide reads, in one-letter code: Lantipeptide Flvbeta.a (63 aa).

Positions 1-28 (MSEKNMEKAGVVKADELDEMIDETTGGA) are cleaved as a propeptide — cleaved by FlvT. 4 positions are modified to 2,3-didehydrobutyrine; by FlvM2: Thr-30, Thr-33, Thr-38, and Thr-39. The lanthionine (Ser-Cys); by FlvM2 cross-link spans 43–49 (SKGLQNC). 2,3-didehydrobutyrine; by FlvM2 occurs at positions 54 and 55.

In terms of processing, maturation of FlvA2 peptides involves the enzymatic conversion of Thr, and Ser into dehydrated AA and the formation of thioether bonds with cysteines. Modifications are processed by the flavecin synthetase FlvM2. This is followed by membrane translocation and cleavage of the modified precursor. Post-translationally, contains DL-lanthionine, when coepressed in E.coli with the flavecin synthetase FlvM2.

The protein resides in the secreted. In terms of biological role, lanthionine-containing peptide that does probably not show antibacterial activity, since its analog [+3]Flvbeta.a does not show antibacterial activity against M.luteus. Also does not show antibiotic activity when tested with [Del2]Flvalpha.a, an analog of Flvalpha.a, which is encoded by the same operon than Flvbeta.a. The bactericidal activity of lantibiotics is based on depolarization of energized bacterial cytoplasmic membranes, initiated by the formation of aqueous transmembrane pores. This is Lantipeptide Flvbeta.a from Ruminococcus flavefaciens.